Reading from the N-terminus, the 217-residue chain is Claudin-9 (217 aa).

At 1–7 the chain is on the cytoplasmic side; it reads MASTGLE. The helical transmembrane segment at 8–28 threads the bilayer; it reads LLGMTLAVLGWLGTLVSCALP. At 29 to 81 the chain is on the extracellular side; sequence LWKVTAFIGNSIVVAQVVWEGLWMSCVVQSTGQMQCKVYDSLLALPQDLQAAR. A helical membrane pass occupies residues 82–102; the sequence is ALCVIALLLALLGLLVAITGA. Residues 103–116 are Cytoplasmic-facing; sequence QCTTCVEDEGAKAR. A helical transmembrane segment spans residues 117–137; sequence IVLTAGVILLLAGILVLIPVC. The Extracellular segment spans residues 138–159; that stretch reads WTAHAIIQDFYNPLVAEALKRE. The chain crosses the membrane as a helical span at residues 160 to 180; that stretch reads LGASLYLGWAAAALLMLGGGL. Topologically, residues 181–217 are cytoplasmic; the sequence is LCCTCPPPQVERPRGPRLGYSIPSRSGASGLDKRDYV. Residues 194 to 217 form a disordered region; the sequence is RGPRLGYSIPSRSGASGLDKRDYV.

Belongs to the claudin family. Interacts with CLDN1, CD81 and OCLN. In terms of tissue distribution, expressed in the liver, in peripheral blood mononuclear cells and hepatocarcinoma cell lines.

The protein resides in the cell junction. It is found in the tight junction. Its subcellular location is the cell membrane. Plays a major role in tight junction-specific obliteration of the intercellular space, through calcium-independent cell-adhesion activity. In terms of biological role, (Microbial infection) Acts as a receptor for hepatitis C virus (HCV) entry into hepatic cells. The sequence is that of Claudin-9 (CLDN9) from Homo sapiens (Human).